Consider the following 266-residue polypeptide: Receptor-like protein 5 (266 aa).

The N-terminal stretch at 1 to 19 (MINYRHIVFCLCVMVVVDS) is a signal peptide. The Extracellular segment spans residues 20–169 (RLTPYLAAIE…PTRNKNKPTV (150 aa)). LRR repeat units follow at residues 93–117 (LTSL…ITKL) and 119–143 (NLTI…IVIL). An N-linked (GlcNAc...) asparagine glycan is attached at asparagine 119. Residues 170-190 (LVLLLGILVGLVVAGGASFGF) form a helical membrane-spanning segment. The Cytoplasmic segment spans residues 191-266 (YLYRIRKQPK…TNQNPHLPYM (76 aa)).

Belongs to the RLP family.

It is found in the cell membrane. The chain is Receptor-like protein 5 from Arabidopsis thaliana (Mouse-ear cress).